Here is a 432-residue protein sequence, read N- to C-terminus: Short/branched chain specific acyl-CoA dehydrogenase, mitochondrial (432 aa).

The N-terminal 33 residues, Met-1–Leu-33, are a transit peptide targeting the mitochondrion. Lys-70 carries the N6-acetyllysine; alternate modification. Lys-70 bears the N6-succinyllysine; alternate mark. FAD-binding positions include Phe-174 to Ser-183 and Trp-207 to Ser-209. Ser-183 is a binding site for substrate. Ser-183 is subject to Phosphoserine. Substrate is bound at residue Tyr-229. Lys-278 carries the post-translational modification N6-succinyllysine. Tyr-283 is a binding site for substrate. Lys-284 carries the N6-acetyllysine; alternate modification. An N6-succinyllysine; alternate modification is found at Lys-284. Asn-291–Arg-294 contributes to the substrate binding site. FAD contacts are provided by residues Arg-319, Gln-330, and Glu-387–Gly-391. The active-site Proton acceptor is Glu-414. FAD is bound at residue Thr-416–Asn-418. At Lys-426 the chain carries N6-acetyllysine.

This sequence belongs to the acyl-CoA dehydrogenase family. As to quaternary structure, homotetramer. FAD serves as cofactor. As to expression, ubiquitously expressed.

It is found in the mitochondrion matrix. The enzyme catalyses 2-methylbutanoyl-CoA + oxidized [electron-transfer flavoprotein] + H(+) = (2E)-2-methylbut-2-enoyl-CoA + reduced [electron-transfer flavoprotein]. It catalyses the reaction (2S)-2-methylbutanoyl-CoA + oxidized [electron-transfer flavoprotein] + H(+) = (2E)-2-methylbut-2-enoyl-CoA + reduced [electron-transfer flavoprotein]. It carries out the reaction (2R)-2-methylbutanoyl-CoA + oxidized [electron-transfer flavoprotein] + H(+) = ethylacryloyl-CoA + reduced [electron-transfer flavoprotein]. The catalysed reaction is butanoyl-CoA + oxidized [electron-transfer flavoprotein] + H(+) = (2E)-butenoyl-CoA + reduced [electron-transfer flavoprotein]. The enzyme catalyses 2-methylpropanoyl-CoA + oxidized [electron-transfer flavoprotein] + H(+) = 2-methylpropenoyl-CoA + reduced [electron-transfer flavoprotein]. It catalyses the reaction hexanoyl-CoA + oxidized [electron-transfer flavoprotein] + H(+) = (2E)-hexenoyl-CoA + reduced [electron-transfer flavoprotein]. It carries out the reaction valproyl-CoA + oxidized [electron-transfer flavoprotein] + H(+) = (2E)-2-propylpent-2-enoyl-CoA + reduced [electron-transfer flavoprotein]. The protein operates within lipid metabolism; mitochondrial fatty acid beta-oxidation. It participates in amino-acid degradation; L-isoleucine degradation. Its activity is regulated as follows. Inhibited by N-ethylmaleimide, hydroxymercuribenzoate, methyl mercury iodide and heavy metals such as Hg2+, Cu2+, and Ag2+. Its function is as follows. Short and branched chain specific acyl-CoA dehydrogenase that catalyzes the removal of one hydrogen from C-2 and C-3 of the fatty acyl-CoA thioester, resulting in the formation of trans-2-enoyl-CoA. Among the different mitochondrial acyl-CoA dehydrogenases, acts specifically on short and branched chain acyl-CoA derivatives such as (S)-2-methylbutyryl-CoA as well as short straight chain acyl-CoAs such as butyryl-CoA. Plays an important role in the metabolism of L-isoleucine by catalyzing the dehydrogenation of 2-methylbutyryl-CoA, one of the steps of the L-isoleucine catabolic pathway. Can also act on valproyl-CoA, a metabolite of the valproic acid drug. In Rattus norvegicus (Rat), this protein is Short/branched chain specific acyl-CoA dehydrogenase, mitochondrial.